The sequence spans 894 residues: Myb-like protein K (894 aa).

The segment covering leucine 93–serine 139 has biased composition (low complexity). Disordered stretches follow at residues leucine 93–serine 221, glutamine 299–threonine 353, glutamine 492–isoleucine 539, and alanine 601–serine 659. Polar residues predominate over residues proline 140 to glutamine 149. The span at asparagine 150–serine 221 shows a compositional bias: low complexity. Residues valine 300–aspartate 309 show a composition bias toward polar residues. Composition is skewed to low complexity over residues methionine 310–threonine 353 and glutamine 492–methionine 527. Composition is skewed to basic and acidic residues over residues glycine 611–aspartate 640 and alanine 649–serine 659. The 56-residue stretch at alanine 649–lysine 704 folds into the HTH myb-type domain. Residues tyrosine 677–leucine 700 constitute a DNA-binding region (H-T-H motif). Positions glutamine 703–serine 852 are disordered. 3 stretches are compositionally biased toward low complexity: residues threonine 710–isoleucine 742, glutamine 751–glutamine 805, and proline 815–asparagine 845.

The protein localises to the nucleus. The polypeptide is Myb-like protein K (mybK) (Dictyostelium discoideum (Social amoeba)).